We begin with the raw amino-acid sequence, 255 residues long: 4-diphosphocytidyl-2-C-methyl-D-erythritol kinase (255 aa).

The active site involves K9. An ATP-binding site is contributed by 95–105 (PSQAGLGGGSS). The active site involves D137.

Belongs to the GHMP kinase family. IspE subfamily.

It catalyses the reaction 4-CDP-2-C-methyl-D-erythritol + ATP = 4-CDP-2-C-methyl-D-erythritol 2-phosphate + ADP + H(+). Its pathway is isoprenoid biosynthesis; isopentenyl diphosphate biosynthesis via DXP pathway; isopentenyl diphosphate from 1-deoxy-D-xylulose 5-phosphate: step 3/6. Catalyzes the phosphorylation of the position 2 hydroxy group of 4-diphosphocytidyl-2C-methyl-D-erythritol. This Sulfurovum sp. (strain NBC37-1) protein is 4-diphosphocytidyl-2-C-methyl-D-erythritol kinase.